A 357-amino-acid polypeptide reads, in one-letter code: tRNA/tmRNA (uracil-C(5))-methyltransferase (357 aa).

S-adenosyl-L-methionine is bound by residues Gln185, Tyr212, Asn217, Glu233, and Asp291. Cys316 functions as the Nucleophile in the catalytic mechanism. The active-site Proton acceptor is the Glu350.

The protein belongs to the class I-like SAM-binding methyltransferase superfamily. RNA M5U methyltransferase family. TrmA subfamily.

It carries out the reaction uridine(54) in tRNA + S-adenosyl-L-methionine = 5-methyluridine(54) in tRNA + S-adenosyl-L-homocysteine + H(+). It catalyses the reaction uridine(341) in tmRNA + S-adenosyl-L-methionine = 5-methyluridine(341) in tmRNA + S-adenosyl-L-homocysteine + H(+). Its function is as follows. Dual-specificity methyltransferase that catalyzes the formation of 5-methyluridine at position 54 (m5U54) in all tRNAs, and that of position 341 (m5U341) in tmRNA (transfer-mRNA). This Campylobacter hominis (strain ATCC BAA-381 / DSM 21671 / CCUG 45161 / LMG 19568 / NCTC 13146 / CH001A) protein is tRNA/tmRNA (uracil-C(5))-methyltransferase.